The chain runs to 89 residues: MEYQYPLDYDWSNEEMVTMVKFYEAIEKAYEKGIIREELMGLYRRFKEIVPSKAEEKKIDKEFQEVSGYSIYRAIQRAKEIEEQKLVKM.

This sequence belongs to the UPF0223 family.

In Bacillus anthracis (strain CDC 684 / NRRL 3495), this protein is UPF0223 protein BAMEG_4214.